Reading from the N-terminus, the 179-residue chain is UPF0316 protein Ping_1367 (179 aa).

Helical transmembrane passes span 28-48 (FLAS…SAQV) and 55-75 (WYLA…GISI).

Belongs to the UPF0316 family.

The protein localises to the cell membrane. In Psychromonas ingrahamii (strain DSM 17664 / CCUG 51855 / 37), this protein is UPF0316 protein Ping_1367.